We begin with the raw amino-acid sequence, 217 residues long: ATP phosphoribosyltransferase (217 aa).

The protein belongs to the ATP phosphoribosyltransferase family. Short subfamily. As to quaternary structure, heteromultimer composed of HisG and HisZ subunits.

The protein localises to the cytoplasm. The enzyme catalyses 1-(5-phospho-beta-D-ribosyl)-ATP + diphosphate = 5-phospho-alpha-D-ribose 1-diphosphate + ATP. It functions in the pathway amino-acid biosynthesis; L-histidine biosynthesis; L-histidine from 5-phospho-alpha-D-ribose 1-diphosphate: step 1/9. In terms of biological role, catalyzes the condensation of ATP and 5-phosphoribose 1-diphosphate to form N'-(5'-phosphoribosyl)-ATP (PR-ATP). Has a crucial role in the pathway because the rate of histidine biosynthesis seems to be controlled primarily by regulation of HisG enzymatic activity. This chain is ATP phosphoribosyltransferase, found in Burkholderia orbicola (strain MC0-3).